Reading from the N-terminus, the 629-residue chain is Polyadenylate-binding protein, cytoplasmic and nuclear (629 aa).

The segment covering Met-1 to Glu-11 has biased composition (polar residues). The disordered stretch occupies residues Met-1 to Ala-48. Residues Ser-20 to Gln-36 show a composition bias toward low complexity. RRM domains lie at Ala-52–Arg-130, Gly-140–Ser-217, Thr-233–Lys-310, and Val-336–Arg-413. Residues Pro-503–Asn-534 form a disordered region. Positions Gln-505–Pro-517 are enriched in polar residues. In terms of domain architecture, PABC spans Ser-537–Lys-618.

Belongs to the polyadenylate-binding protein type-1 family.

The protein resides in the cytoplasm. Its subcellular location is the nucleus. In terms of biological role, binds the poly(A) tail of mRNA. Appears to be an important mediator of the multiple roles of the poly(A) tail in mRNA biogenesis, stability and translation. In the nucleus, involved in both mRNA cleavage and polyadenylation. Is also required for efficient mRNA export to the cytoplasm. Acts in concert with a poly(A)-specific nuclease (PAN) to affect poly(A) tail shortening, which may occur concomitantly with either nucleocytoplasmic mRNA transport or translational initiation. In the cytoplasm, stimulates translation initiation and regulates mRNA decay through translation termination-coupled poly(A) shortening, probably mediated by PAN. This is Polyadenylate-binding protein, cytoplasmic and nuclear (PAB1) from Candida albicans (strain SC5314 / ATCC MYA-2876) (Yeast).